Reading from the N-terminus, the 99-residue chain is Imizoquin biosynthesis cluster protein A (99 aa).

The protein operates within secondary metabolite biosynthesis. In terms of biological role, part of the gene cluster that mediates the biosynthesis of imizoquins A to D, tripeptide-derived alkaloids that serve a protective role against oxidative stress that are essential for normal germination. ImqB is a canonical three-module NRPS that assembles the tripeptide backbone of the imizoquins via condensation of Trp, Tyr, and Leu-derived precursors. N-methylation by imqF and phenol oxidation by imqC, followed by cyclization via the FAD-dependent oxidase imqH carry out the three-step transformation of L-tyrosine into tetrahydroisoquinoline. Importantly, this sequence requires the presence of a free amine in the tyrosine moiety, indicating that isoquinoline formation occurs prior to peptide bond formation. The imidazolidin-4-one ring of imizoquins could form following additional oxidation of the methyl-derived bridgehead carbon by imqH. Lastly, O-methylation by imqG and leucine hydroxylation by imqE complete biosynthesis of the imizoquins. This chain is Imizoquin biosynthesis cluster protein A, found in Aspergillus flavus (strain ATCC 200026 / FGSC A1120 / IAM 13836 / NRRL 3357 / JCM 12722 / SRRC 167).